A 273-amino-acid polypeptide reads, in one-letter code: uncharacterized protein (273 aa).

It belongs to the PhyH family.

This is an uncharacterized protein from Mycobacterium tuberculosis (strain ATCC 25618 / H37Rv).